A 1012-amino-acid polypeptide reads, in one-letter code: MAKRGKSVVRTLEDLTLDSGYGGAADSFRSSSLSLCCSEAHISYAHGGHCWNLTDSMRSRHNSLDTVNTVLAEDGETLECSGHCAKLPELEDVPWSLGEVENALNKEEELRFGTVSADLLARLSALVCRALVRIAREAQRLSLRYGKCTKYEVQSAIKMILSWTISVNCIAASLSALSMYNMSTEDKFSRGKSERCGLVFSVGKFFRWMVDSRVAVRVHEHAAIYLTGCMESLFREVFTRVLNSSVVEKDNGIPKFTLESFEQALSNDSELYGLLLPYQHLTCGKNANGILSLPDSLSLHRNQQCSSKAGDAYSQSEQRTIEQSLLATRVGSIAELSDLVSRAMHYLQPLSIKNHSNGTPLPQKSSLVHWEPEALYTLCYFMHCPQMEWENPNVEPSKVTLQNERPFLVLPPLMEWIRVALAHAEHRRSFSVDSDDVRQAARLLLPGVDCEPRQLKTDDCFCVSRKLDAASTEAKFLQDLGFRMLNCGRTDLVNQAINLLGPGGINSMSEQGMTPLMYACVRGDEAMVQMLLDAGADINSEVPNTVQKFPSVFPETRQATPLTFAVLHQHIPVVQLLLDAGANVEGSLQDGMENYTETPLQLASAAGNFELVSLLLERGADPMIGTMYRNGISTAPHGDMNSYSLAAAHGHRNVFCKLLSQSEKGKADVLSLQEILAEGSDLEERNSLKMEATRTGKAKLKALREAMYHSSEHGYVDITLDIRSLGVPWTLHTWLESLRTCFLQHRRPLIQGLLKEFSSIEEEEYTEELITHGLPLMFQILRASKNEVISQQLAVIFTQCYGPYPIPKLTEIKRKQTSRLDPHFLNNKEMSDVTFLVEGKPFYAHKVLLFTASNRFKLLLANRPAAENTCIEISHVKYNVFQLVMQYLYCGGTDALHIRNTEVMDLLSASKFFQLEALQRHCEIICAKNINTETCVEIYNHAKFLEAPELSAYIEGYFLKNMAVLIELEPFKQLLYNTPVENCCPDVLHDLEKTLATRIRSIHLSSSKGSIV.

A helical membrane pass occupies residues 160–180 (ILSWTISVNCIAASLSALSMY). 3 ANK repeats span residues 511 to 540 (QGMT…DINS), 557 to 586 (RQAT…NVEG), and 595 to 624 (YTET…DPMI). The 67-residue stretch at 831-897 (SDVTFLVEGK…LYCGGTDALH (67 aa)) folds into the BTB domain.

The protein resides in the membrane. This Danio rerio (Zebrafish) protein is Ankyrin repeat- and BTB/POZ domain-containing protein 3-B (abtb3b).